The following is a 60-amino-acid chain: Andropin (60 aa).

The signal sequence occupies residues 1–23 (MKYFVVLVVLALILAIAVGPSDA).

The protein belongs to the andropin family. As to expression, ejaculatory duct of adult males.

The protein resides in the secreted. In terms of biological role, male-specific peptide with moderate activity against Gram-positive bacteria. The sequence is that of Andropin (Anp) from Drosophila simulans (Fruit fly).